The primary structure comprises 86 residues: Cell division topological specificity factor (86 aa).

This sequence belongs to the MinE family.

Prevents the cell division inhibition by proteins MinC and MinD at internal division sites while permitting inhibition at polar sites. This ensures cell division at the proper site by restricting the formation of a division septum at the midpoint of the long axis of the cell. This Allorhizobium ampelinum (strain ATCC BAA-846 / DSM 112012 / S4) (Agrobacterium vitis (strain S4)) protein is Cell division topological specificity factor.